We begin with the raw amino-acid sequence, 415 residues long: UDP-galactose transporter homolog 1 (415 aa).

The disordered stretch occupies residues 1-39 (MHLVPEGSESMSTQQNGSAQKPVTLNGSASTKGQAPEAP). Positions 9–33 (ESMSTQQNGSAQKPVTLNGSASTKG) are enriched in polar residues. N-linked (GlcNAc...) asparagine glycosylation is found at N16 and N26. 5 consecutive transmembrane segments (helical) span residues 45-65 (LIQL…WGVL), 95-115 (IVLN…YLYF), 132-152 (ILFP…FGYA), 161-181 (TFIL…LTIF), and 185-205 (YPLY…TFTL). Residue N221 is glycosylated (N-linked (GlcNAc...) asparagine). Residues 223-243 (SGSSLYGIFLLSINLLLDGLT) form a helical membrane-spanning segment. A glycan (N-linked (GlcNAc...) asparagine) is linked at N244. A run of 3 helical transmembrane segments spans residues 281–301 (LLVM…PIPI), 325–345 (NVLG…YTLS), and 368–388 (VFWF…LVFG).

This sequence belongs to the nucleotide-sugar transporter family. SLC35B subfamily.

It is found in the endoplasmic reticulum membrane. Functionally, may be involved in specific transport of UDP-Gal from the cytosol to the Golgi lumen. Involved in the maintenance of optimal conditions for the folding of secretory pathway proteins in the endoplasmic reticulum. This is UDP-galactose transporter homolog 1 (hut1) from Aspergillus fumigatus (strain ATCC MYA-4609 / CBS 101355 / FGSC A1100 / Af293) (Neosartorya fumigata).